Consider the following 499-residue polypeptide: ATP synthase subunit beta, chloroplastic (499 aa).

ATP is bound at residue 170-177 (GGAGVGKT).

Belongs to the ATPase alpha/beta chains family. In terms of assembly, F-type ATPases have 2 components, CF(1) - the catalytic core - and CF(0) - the membrane proton channel. CF(1) has five subunits: alpha(3), beta(3), gamma(1), delta(1), epsilon(1). CF(0) has four main subunits: a(1), b(1), b'(1) and c(9-12).

The protein localises to the plastid. It localises to the chloroplast thylakoid membrane. It carries out the reaction ATP + H2O + 4 H(+)(in) = ADP + phosphate + 5 H(+)(out). Its function is as follows. Produces ATP from ADP in the presence of a proton gradient across the membrane. The catalytic sites are hosted primarily by the beta subunits. This is ATP synthase subunit beta, chloroplastic from Ipomoea purpurea (Common morning glory).